A 284-amino-acid chain; its full sequence is Efem/EfeO family lipoprotein (284 aa).

The signal sequence occupies residues 1-17 (MKKLTTLLLASTLLIAA). Residue Cys18 is the site of N-palmitoyl cysteine attachment. A lipid anchor (S-diacylglycerol cysteine) is attached at Cys18.

Belongs to the EfeM/EfeO family.

The protein localises to the cell membrane. The chain is Efem/EfeO family lipoprotein from Staphylococcus aureus (strain MSSA476).